A 291-amino-acid chain; its full sequence is Formamidopyrimidine-DNA glycosylase (291 aa).

The active-site Schiff-base intermediate with DNA is proline 2. The active-site Proton donor is glutamate 3. Lysine 58 acts as the Proton donor; for beta-elimination activity in catalysis. Histidine 104, arginine 123, and lysine 166 together coordinate DNA. Residues 257-291 form an FPG-type zinc finger; it reads KVYDREGEPCPTCGGTVQRFVQNGRSTFWCPKCQK. Residue arginine 281 is the Proton donor; for delta-elimination activity of the active site.

The protein belongs to the FPG family. Monomer. Zn(2+) is required as a cofactor.

It carries out the reaction Hydrolysis of DNA containing ring-opened 7-methylguanine residues, releasing 2,6-diamino-4-hydroxy-5-(N-methyl)formamidopyrimidine.. It catalyses the reaction 2'-deoxyribonucleotide-(2'-deoxyribose 5'-phosphate)-2'-deoxyribonucleotide-DNA = a 3'-end 2'-deoxyribonucleotide-(2,3-dehydro-2,3-deoxyribose 5'-phosphate)-DNA + a 5'-end 5'-phospho-2'-deoxyribonucleoside-DNA + H(+). Functionally, involved in base excision repair of DNA damaged by oxidation or by mutagenic agents. Acts as a DNA glycosylase that recognizes and removes damaged bases. Has a preference for oxidized purines, such as 7,8-dihydro-8-oxoguanine (8-oxoG). Has AP (apurinic/apyrimidinic) lyase activity and introduces nicks in the DNA strand. Cleaves the DNA backbone by beta-delta elimination to generate a single-strand break at the site of the removed base with both 3'- and 5'-phosphates. The sequence is that of Formamidopyrimidine-DNA glycosylase from Rhodopseudomonas palustris (strain ATCC BAA-98 / CGA009).